A 141-amino-acid chain; its full sequence is Putative antiporter subunit mnhB2 (141 aa).

Transmembrane regions (helical) follow at residues 10 to 30, 35 to 55, 70 to 90, and 114 to 134; these read TVTK…FFAG, GGGF…FLAF, ILMI…MFFG, and ITLF…TVML.

This sequence belongs to the CPA3 antiporters (TC 2.A.63) subunit B family. May form a heterooligomeric complex that consists of seven subunits: mnhA2, mnhB2, mnhC2, mnhD2, mnhE2, mnhF2 and mnhG2.

It localises to the cell membrane. This Staphylococcus aureus (strain Mu3 / ATCC 700698) protein is Putative antiporter subunit mnhB2 (mnhB2).